A 329-amino-acid chain; its full sequence is Phosphate acyltransferase (329 aa).

This sequence belongs to the PlsX family. In terms of assembly, homodimer. Probably interacts with PlsY.

It localises to the cytoplasm. The enzyme catalyses a fatty acyl-[ACP] + phosphate = an acyl phosphate + holo-[ACP]. Its pathway is lipid metabolism; phospholipid metabolism. In terms of biological role, catalyzes the reversible formation of acyl-phosphate (acyl-PO(4)) from acyl-[acyl-carrier-protein] (acyl-ACP). This enzyme utilizes acyl-ACP as fatty acyl donor, but not acyl-CoA. This is Phosphate acyltransferase from Campylobacter fetus subsp. fetus (strain 82-40).